A 348-amino-acid chain; its full sequence is Aspartate carbamoyltransferase catalytic subunit (348 aa).

Carbamoyl phosphate is bound by residues arginine 57 and threonine 58. Lysine 86 provides a ligand contact to L-aspartate. Carbamoyl phosphate is bound by residues arginine 107, histidine 135, and glutamine 138. 2 residues coordinate L-aspartate: arginine 172 and arginine 234. 2 residues coordinate carbamoyl phosphate: leucine 274 and proline 275.

This sequence belongs to the aspartate/ornithine carbamoyltransferase superfamily. ATCase family. As to quaternary structure, heterododecamer (2C3:3R2) of six catalytic PyrB chains organized as two trimers (C3), and six regulatory PyrI chains organized as three dimers (R2).

The catalysed reaction is carbamoyl phosphate + L-aspartate = N-carbamoyl-L-aspartate + phosphate + H(+). It functions in the pathway pyrimidine metabolism; UMP biosynthesis via de novo pathway; (S)-dihydroorotate from bicarbonate: step 2/3. In terms of biological role, catalyzes the condensation of carbamoyl phosphate and aspartate to form carbamoyl aspartate and inorganic phosphate, the committed step in the de novo pyrimidine nucleotide biosynthesis pathway. In Dichelobacter nodosus (strain VCS1703A), this protein is Aspartate carbamoyltransferase catalytic subunit.